Here is a 332-residue protein sequence, read N- to C-terminus: Glyceraldehyde-3-phosphate dehydrogenase 2 (332 aa).

NAD(+) contacts are provided by residues 11–12 (RI), Asp-32, and Arg-77. D-glyceraldehyde 3-phosphate contacts are provided by residues 148-150 (SCT), Thr-179, 208-209 (TG), and Arg-231. Cys-149 (nucleophile) is an active-site residue. Asn-313 contributes to the NAD(+) binding site.

It belongs to the glyceraldehyde-3-phosphate dehydrogenase family. Homotetramer.

Its subcellular location is the cytoplasm. It carries out the reaction D-glyceraldehyde 3-phosphate + phosphate + NAD(+) = (2R)-3-phospho-glyceroyl phosphate + NADH + H(+). Its pathway is carbohydrate degradation; glycolysis; pyruvate from D-glyceraldehyde 3-phosphate: step 1/5. In Drosophila pseudoobscura pseudoobscura (Fruit fly), this protein is Glyceraldehyde-3-phosphate dehydrogenase 2 (Gapdh2).